The sequence spans 508 residues: Maturase K (508 aa).

It belongs to the intron maturase 2 family. MatK subfamily.

The protein localises to the plastid. It localises to the chloroplast. In terms of biological role, usually encoded in the trnK tRNA gene intron. Probably assists in splicing its own and other chloroplast group II introns. The chain is Maturase K from Amburana cearensis (Cerejeira).